The chain runs to 258 residues: Acyl-[acyl-carrier-protein]--UDP-N-acetylglucosamine O-acyltransferase (258 aa).

It belongs to the transferase hexapeptide repeat family. LpxA subfamily. In terms of assembly, homotrimer.

The protein resides in the cytoplasm. It carries out the reaction a (3R)-hydroxyacyl-[ACP] + UDP-N-acetyl-alpha-D-glucosamine = a UDP-3-O-[(3R)-3-hydroxyacyl]-N-acetyl-alpha-D-glucosamine + holo-[ACP]. Its pathway is glycolipid biosynthesis; lipid IV(A) biosynthesis; lipid IV(A) from (3R)-3-hydroxytetradecanoyl-[acyl-carrier-protein] and UDP-N-acetyl-alpha-D-glucosamine: step 1/6. Functionally, involved in the biosynthesis of lipid A, a phosphorylated glycolipid that anchors the lipopolysaccharide to the outer membrane of the cell. In Pseudomonas syringae pv. tomato (strain ATCC BAA-871 / DC3000), this protein is Acyl-[acyl-carrier-protein]--UDP-N-acetylglucosamine O-acyltransferase.